A 156-amino-acid polypeptide reads, in one-letter code: ATP synthase subunit b (156 aa).

The chain crosses the membrane as a helical span at residues 11 to 31 (LIAFALFVWFCMKFVWPPIIN).

It belongs to the ATPase B chain family. In terms of assembly, F-type ATPases have 2 components, F(1) - the catalytic core - and F(0) - the membrane proton channel. F(1) has five subunits: alpha(3), beta(3), gamma(1), delta(1), epsilon(1). F(0) has three main subunits: a(1), b(2) and c(10-14). The alpha and beta chains form an alternating ring which encloses part of the gamma chain. F(1) is attached to F(0) by a central stalk formed by the gamma and epsilon chains, while a peripheral stalk is formed by the delta and b chains.

The protein localises to the cell inner membrane. In terms of biological role, f(1)F(0) ATP synthase produces ATP from ADP in the presence of a proton or sodium gradient. F-type ATPases consist of two structural domains, F(1) containing the extramembraneous catalytic core and F(0) containing the membrane proton channel, linked together by a central stalk and a peripheral stalk. During catalysis, ATP synthesis in the catalytic domain of F(1) is coupled via a rotary mechanism of the central stalk subunits to proton translocation. Component of the F(0) channel, it forms part of the peripheral stalk, linking F(1) to F(0). This Haemophilus influenzae (strain 86-028NP) protein is ATP synthase subunit b.